The chain runs to 185 residues: Threonylcarbamoyl-AMP synthase (185 aa).

A YrdC-like domain is found at 3–185; sequence EQAPAEVKQV…IDAISGKILR (183 aa).

The protein belongs to the SUA5 family. TsaC subfamily.

The protein localises to the cytoplasm. The catalysed reaction is L-threonine + hydrogencarbonate + ATP = L-threonylcarbamoyladenylate + diphosphate + H2O. Functionally, required for the formation of a threonylcarbamoyl group on adenosine at position 37 (t(6)A37) in tRNAs that read codons beginning with adenine. Catalyzes the conversion of L-threonine, HCO(3)(-)/CO(2) and ATP to give threonylcarbamoyl-AMP (TC-AMP) as the acyladenylate intermediate, with the release of diphosphate. This Shewanella woodyi (strain ATCC 51908 / MS32) protein is Threonylcarbamoyl-AMP synthase.